Here is a 60-residue protein sequence, read N- to C-terminus: Single-pass membrane and coiled-coil domain-containing protein 4 homolog (60 aa).

The disordered stretch occupies residues 1 to 22 (MRKLRGGQTRETRKQKQERREE). Over residues 8 to 22 (QTRETRKQKQERREE) the composition is skewed to basic and acidic residues. Residues 8–34 (QTRETRKQKQERREENQKIQQQLKTIV) are a coiled coil. A helical transmembrane segment spans residues 30–50 (LKTIVLPICGVVFLCIVAYVF).

It belongs to the SMCO4 family.

The protein resides in the membrane. The sequence is that of Single-pass membrane and coiled-coil domain-containing protein 4 homolog from Culex quinquefasciatus (Southern house mosquito).